A 1549-amino-acid chain; its full sequence is Structural maintenance of chromosomes protein 4 (1549 aa).

The tract at residues 1 to 78 is disordered; it reads MPPKTSAAPP…LFSLQLPSRP (78 aa). The segment covering 26 to 36 has biased composition (basic residues); that stretch reads KPQKKTTKPVN. The segment covering 37-59 has biased composition (basic and acidic residues); that stretch reads RHKEGSKDPEEELQRAVNEKFDG. 121–128 provides a ligand contact to ATP; sequence GPNGSGKS. Residues 326–604 adopt a coiled-coil conformation; the sequence is MKLEQRRRQR…QNSSCSSSNK (279 aa). Basic and acidic residues-rich tracts occupy residues 396–407 and 420–444; these read LSDLGTEETRRK and AEAEKEKEVKKRSNLEAAPEKAERK. 2 disordered regions span residues 396-444 and 460-485; these read LSDL…AERK and KTANEEADKNLDEFEKRSEAPKEEQK. Residues 619–734 form the SMC hinge domain; it reads KSFHGRLGDL…GDSTQEAQRM (116 aa). 2 coiled-coil regions span residues 786–1058 and 1144–1182; these read KAAE…KVNR and EKINEISSRDAEEMQMKLKVCEQQVEALKAKVDISSIKA. Polar residues predominate over residues 1440 to 1459; sequence IQTTRDVTSRPQSKATTSGD. A disordered region spans residues 1440–1549; it reads IQTTRDVTSR…AIVDDDDDME (110 aa). The span at 1460 to 1474 shows a compositional bias: basic and acidic residues; sequence GTERPASRSASRPES. The segment covering 1510–1523 has biased composition (polar residues); the sequence is TPPSKRSNSASTPK.

This sequence belongs to the SMC family. SMC4 subfamily. In terms of assembly, component of the condensin I complex, which contains the mix-1/SMC2 and smc-4/SMC4 heterodimer, and three non SMC subunits that probably regulate the complex: dpy-26, capg-1 and dpy-28. Within the complex, interacts with mix-1, dpy-26, capg-1 and dpy-28. Component of the condensin II complex, which contains the mix-1/SMC2 and smc-4/SMC4 heterodimer, and three non SMC subunits, kle-2, capg-2 and hcp-6 that probably regulate the complex. Within the complex, interacts with mix-1, kle-2, capg-2 and hcp-6. Interacts with smcl-1.

The protein localises to the nucleus. Its subcellular location is the chromosome. In terms of biological role, central component of the condensin I complex, a complex required for conversion of interphase chromatin into mitotic-like condense chromosomes. The condensin I complex introduces positive supercoils into relaxed DNA in the presence of type I topoisomerases. Converts nicked DNA into positive knotted forms in the presence of type II topoisomerases. Also a central component of the condensin II complex, a complex that seems to play a role in prophase chromosome condensation. Both the condensin complex I and II play a role in meiotic and mitotic chromosome segregation. Plays a role in robust cytokinesis upon the presence of chromatin obstructions. This chain is Structural maintenance of chromosomes protein 4 (smc-4), found in Caenorhabditis elegans.